A 209-amino-acid polypeptide reads, in one-letter code: Octanoyltransferase (209 aa).

Residues 30-209 enclose the BPL/LPL catalytic domain; the sequence is DHEPEIIYLV…IQTEFNKIFK (180 aa). Residues 69–76, 143–145, and 156–158 contribute to the substrate site; these read RGGKFTFH, AIG, and GVA. Residue C174 is the Acyl-thioester intermediate of the active site.

The protein belongs to the LipB family.

It is found in the cytoplasm. The catalysed reaction is octanoyl-[ACP] + L-lysyl-[protein] = N(6)-octanoyl-L-lysyl-[protein] + holo-[ACP] + H(+). The protein operates within protein modification; protein lipoylation via endogenous pathway; protein N(6)-(lipoyl)lysine from octanoyl-[acyl-carrier-protein]: step 1/2. Catalyzes the transfer of endogenously produced octanoic acid from octanoyl-acyl-carrier-protein onto the lipoyl domains of lipoate-dependent enzymes. Lipoyl-ACP can also act as a substrate although octanoyl-ACP is likely to be the physiological substrate. In Rickettsia africae (strain ESF-5), this protein is Octanoyltransferase.